We begin with the raw amino-acid sequence, 300 residues long: Probable L-serine dehydratase, alpha chain (300 aa).

This sequence belongs to the iron-sulfur dependent L-serine dehydratase family. In terms of assembly, heterodimer of an alpha chain and a beta chain. [4Fe-4S] cluster serves as cofactor.

It catalyses the reaction L-serine = pyruvate + NH4(+). Its pathway is carbohydrate biosynthesis; gluconeogenesis. The protein is Probable L-serine dehydratase, alpha chain (sdaAA) of Bacillus subtilis (strain 168).